The chain runs to 691 residues: DNA ligase (691 aa).

Residues 41-45, 90-91, and Glu130 each bind NAD(+); these read DAEYD and SL. Lys132 serves as the catalytic N6-AMP-lysine intermediate. NAD(+) contacts are provided by Arg153, Glu190, Lys307, and Lys331. Zn(2+)-binding residues include Cys425, Cys428, Cys443, and Cys449. Residues 610 to 691 enclose the BRCT domain; it reads APQGVLAGKT…MHTLLEGHAR (82 aa).

This sequence belongs to the NAD-dependent DNA ligase family. LigA subfamily. It depends on Mg(2+) as a cofactor. Mn(2+) is required as a cofactor.

It catalyses the reaction NAD(+) + (deoxyribonucleotide)n-3'-hydroxyl + 5'-phospho-(deoxyribonucleotide)m = (deoxyribonucleotide)n+m + AMP + beta-nicotinamide D-nucleotide.. DNA ligase that catalyzes the formation of phosphodiester linkages between 5'-phosphoryl and 3'-hydroxyl groups in double-stranded DNA using NAD as a coenzyme and as the energy source for the reaction. It is essential for DNA replication and repair of damaged DNA. The protein is DNA ligase of Burkholderia mallei (strain NCTC 10247).